The primary structure comprises 249 residues: Kallikrein-7 (249 aa).

The N-terminal stretch at 1 to 21 (MGVWLLSLITVLLSLALETAG) is a signal peptide. Residues 22 to 25 (QGER) constitute a propeptide, activation peptide. Positions 26 to 246 (IIDGYKCKEG…YKRWVMETMK (221 aa)) are serine protease. 6 disulfide bridges follow: Cys32–Cys161, Cys51–Cys67, Cys133–Cys235, Cys140–Cys207, Cys172–Cys186, and Cys197–Cys222. Residues His66 and Asp108 each act as charge relay system in the active site. The active-site Charge relay system is Ser201.

The protein belongs to the peptidase S1 family. Kallikrein subfamily. Expressed in skin and, at lower levels, in lung, kidney, brain, heart and spleen. In skin, expressed in high suprabasal keratinocytes and in the luminal parts of hair follicles. Not detected in liver and skeletal muscle.

It localises to the secreted. It carries out the reaction Cleavage of proteins with aromatic side chains in the P1 position.. Its activity is regulated as follows. Inhibited by Zn2+ and Cu2+ at low micromolar concentrations. Inhibited by SERPINA12. May catalyze the degradation of intercellular cohesive structures in the cornified layer of the skin in the continuous shedding of cells from the skin surface. Specific for amino acid residues with aromatic side chains in the P1 position. Cleaves insulin A chain at '14-Tyr-|-Gln-15' and insulin B chain at '6-Leu-|-Cys-7', '16-Tyr-|-Leu-17', '25-Phe-|-Tyr-26' and '26-Tyr-|-Thr-27'. Could play a role in the activation of precursors to inflammatory cytokines. The sequence is that of Kallikrein-7 (Klk7) from Mus musculus (Mouse).